The sequence spans 443 residues: Ribosomal protein uS12 methylthiotransferase RimO (443 aa).

Positions 10–120 constitute an MTTase N-terminal domain; that stretch reads PRVGFVSLGC…VVKAVHQHLP (111 aa). [4Fe-4S] cluster contacts are provided by C19, C55, C84, C151, C155, and C158. The 239-residue stretch at 137–375 folds into the Radical SAM core domain; it reads LTPAHYAYLK…DFQEDISTQR (239 aa). Positions 377-443 constitute a TRAM domain; it reads ERWIGRDITV…VHDLYARPLP (67 aa).

It belongs to the methylthiotransferase family. RimO subfamily. [4Fe-4S] cluster is required as a cofactor.

It is found in the cytoplasm. The enzyme catalyses L-aspartate(89)-[ribosomal protein uS12]-hydrogen + (sulfur carrier)-SH + AH2 + 2 S-adenosyl-L-methionine = 3-methylsulfanyl-L-aspartate(89)-[ribosomal protein uS12]-hydrogen + (sulfur carrier)-H + 5'-deoxyadenosine + L-methionine + A + S-adenosyl-L-homocysteine + 2 H(+). Catalyzes the methylthiolation of an aspartic acid residue of ribosomal protein uS12. In Aromatoleum aromaticum (strain DSM 19018 / LMG 30748 / EbN1) (Azoarcus sp. (strain EbN1)), this protein is Ribosomal protein uS12 methylthiotransferase RimO.